The primary structure comprises 259 residues: MNSFFPSRKLGQNFTVNLSVIKRIFAFVKNLNPQAIVEIGVGKGALTNYLLKLKIPYKGIEIDKRLIEYLLVEKILTEDQLVKGDILKKDFNSFFENLSPLLCGNIPYSITSPIINKFLESKLRSFVLMTQKEFANRLLAKVNSSDYSAFGAFCQYYLTITTVFKIDRHAFKPKPKVDSTLILLEKNKSVSYDFKFGLFLKQCFNQRRKMLINNLKHFFAVDYLLNIIQKQNLKTSIRAQELSPCQLFNLYQNICNGKN.

6 residues coordinate S-adenosyl-L-methionine: N13, T15, G40, E61, D85, and N105.

The protein belongs to the class I-like SAM-binding methyltransferase superfamily. rRNA adenine N(6)-methyltransferase family. RsmA subfamily.

The protein localises to the cytoplasm. The catalysed reaction is adenosine(1518)/adenosine(1519) in 16S rRNA + 4 S-adenosyl-L-methionine = N(6)-dimethyladenosine(1518)/N(6)-dimethyladenosine(1519) in 16S rRNA + 4 S-adenosyl-L-homocysteine + 4 H(+). In terms of biological role, specifically dimethylates two adjacent adenosines (A1518 and A1519) in the loop of a conserved hairpin near the 3'-end of 16S rRNA in the 30S particle. May play a critical role in biogenesis of 30S subunits. This is Ribosomal RNA small subunit methyltransferase A from Mycoplasma genitalium (strain ATCC 33530 / DSM 19775 / NCTC 10195 / G37) (Mycoplasmoides genitalium).